Consider the following 106-residue polypeptide: Urease subunit beta (106 aa).

Belongs to the urease beta subunit family. As to quaternary structure, heterotrimer of UreA (gamma), UreB (beta) and UreC (alpha) subunits. Three heterotrimers associate to form the active enzyme.

The protein resides in the cytoplasm. The enzyme catalyses urea + 2 H2O + H(+) = hydrogencarbonate + 2 NH4(+). It participates in nitrogen metabolism; urea degradation; CO(2) and NH(3) from urea (urease route): step 1/1. This chain is Urease subunit beta, found in Escherichia coli O157:H7.